The sequence spans 274 residues: Nickel/cobalt efflux system RcnA (274 aa).

Over 1–12 the chain is Periplasmic; that stretch reads MTEFTTLLQQGN. Residues 13–33 form a helical membrane-spanning segment; that stretch reads AWFFIPSVILLGALHGLEPGH. Topologically, residues 34–56 are cytoplasmic; sequence SKTMMAAFIIAIKGTIKQAVMLG. The helical transmembrane segment at 57–77 threads the bilayer; the sequence is LAATISHTAVVWLIAFGGMVI. Topologically, residues 78 to 86 are periplasmic; sequence SKRFTAQSA. The helical transmembrane segment at 87–107 threads the bilayer; sequence EPWLQLISAVIIISTAFWMFW. Topologically, residues 108–174 are cytoplasmic; that stretch reads RTWRGERNWL…FDGREVTNWQ (67 aa). Residues 127-153 form a disordered region; the sequence is HHHHDHEHHHDHGHHHHHEHGEYQDAH. The segment covering 129 to 144 has biased composition (basic residues); that stretch reads HHDHEHHHDHGHHHHH. A helical membrane pass occupies residues 175-195; the sequence is ILLFGLTGGLIPCPAAITVLL. Over 196 to 209 the chain is Periplasmic; sequence ICIQLKALTLGATL. The helical transmembrane segment at 210-230 threads the bilayer; it reads VVSFSIGLALTLVTVGVGAAI. Topologically, residues 231–251 are cytoplasmic; the sequence is SVQQVAKRWSGFNTLAKRAPY. The helical transmembrane segment at 252 to 272 threads the bilayer; it reads FSSLLIGLVGVYMGVHGFMGI. Over 273–274 the chain is Periplasmic; that stretch reads MR.

It belongs to the NiCoT transporter (TC 2.A.52) family. RcnA subfamily.

The protein resides in the cell inner membrane. In terms of biological role, efflux system for nickel and cobalt. The sequence is that of Nickel/cobalt efflux system RcnA (rcnA) from Escherichia coli O9:H4 (strain HS).